Here is a 203-residue protein sequence, read N- to C-terminus: Large ribosomal subunit protein uL13 (203 aa).

N-acetylalanine is present on Ala2. At Arg59 the chain carries Citrulline. The residue at position 77 (Ser77) is a Phosphoserine. At Arg140 the chain carries Citrulline. At Lys191 the chain carries N6-acetyllysine.

This sequence belongs to the universal ribosomal protein uL13 family. As to quaternary structure, component of the 60S ribosome. Component of the GAIT complex. Interacts with EIF4G1. In terms of processing, phosphorylation at Ser-77 upon interferon-gamma treatment in macrophages involves a DAPK1-DAPK3 kinase cascade and is causing release from the ribosome, association with the GAIT complex and subsequent involvement in transcript-selective translation inhibition. Post-translationally, citrullinated by PADI4.

It localises to the cytoplasm. Functionally, associated with ribosomes but is not required for canonical ribosome function and has extra-ribosomal functions. Component of the GAIT (gamma interferon-activated inhibitor of translation) complex which mediates interferon-gamma-induced transcript-selective translation inhibition in inflammation processes. Upon interferon-gamma activation and subsequent phosphorylation dissociates from the ribosome and assembles into the GAIT complex which binds to stem loop-containing GAIT elements in the 3'-UTR of diverse inflammatory mRNAs (such as ceruplasmin) and suppresses their translation. In the GAIT complex interacts with m7G cap-bound eIF4G at or near the eIF3-binding site and blocks the recruitment of the 43S ribosomal complex. Involved in methylation of rRNA. This Rattus norvegicus (Rat) protein is Large ribosomal subunit protein uL13 (Rpl13a).